The following is a 123-amino-acid chain: Large ribosomal subunit protein uL14 (123 aa).

The protein belongs to the universal ribosomal protein uL14 family. As to quaternary structure, part of the 50S ribosomal subunit. Forms a cluster with proteins L3 and L19. In the 70S ribosome, L14 and L19 interact and together make contacts with the 16S rRNA in bridges B5 and B8.

In terms of biological role, binds to 23S rRNA. Forms part of two intersubunit bridges in the 70S ribosome. The protein is Large ribosomal subunit protein uL14 of Escherichia coli O139:H28 (strain E24377A / ETEC).